Reading from the N-terminus, the 118-residue chain is Small ribosomal subunit protein uS13 (118 aa).

The segment at 95 to 118 is disordered; sequence LPVRGQRTRTNARTRKGPKKLINK.

The protein belongs to the universal ribosomal protein uS13 family. Part of the 30S ribosomal subunit. Forms a loose heterodimer with protein S19. Forms two bridges to the 50S subunit in the 70S ribosome.

Its function is as follows. Located at the top of the head of the 30S subunit, it contacts several helices of the 16S rRNA. In the 70S ribosome it contacts the 23S rRNA (bridge B1a) and protein L5 of the 50S subunit (bridge B1b), connecting the 2 subunits; these bridges are implicated in subunit movement. Contacts the tRNAs in the A and P-sites. This Blochmanniella floridana protein is Small ribosomal subunit protein uS13.